The chain runs to 140 residues: Nucleoside diphosphate kinase (140 aa).

The ATP site is built by lysine 11, phenylalanine 59, arginine 87, threonine 93, arginine 104, and asparagine 114. Histidine 117 (pros-phosphohistidine intermediate) is an active-site residue.

This sequence belongs to the NDK family. In terms of assembly, homotetramer. Requires Mg(2+) as cofactor.

The protein localises to the cytoplasm. It carries out the reaction a 2'-deoxyribonucleoside 5'-diphosphate + ATP = a 2'-deoxyribonucleoside 5'-triphosphate + ADP. The enzyme catalyses a ribonucleoside 5'-diphosphate + ATP = a ribonucleoside 5'-triphosphate + ADP. Functionally, major role in the synthesis of nucleoside triphosphates other than ATP. The ATP gamma phosphate is transferred to the NDP beta phosphate via a ping-pong mechanism, using a phosphorylated active-site intermediate. This Dinoroseobacter shibae (strain DSM 16493 / NCIMB 14021 / DFL 12) protein is Nucleoside diphosphate kinase.